Consider the following 800-residue polypeptide: DNA topoisomerase 4 subunit A (800 aa).

Positions 31-495 (LPDVRDGLKP…EIEEIKIDKE (465 aa)) constitute a Topo IIA-type catalytic domain. The O-(5'-phospho-DNA)-tyrosine intermediate role is filled by Tyr-119.

The protein belongs to the type II topoisomerase GyrA/ParC subunit family. ParC type 2 subfamily. As to quaternary structure, heterotetramer composed of ParC and ParE.

Its subcellular location is the cell membrane. It carries out the reaction ATP-dependent breakage, passage and rejoining of double-stranded DNA.. Its function is as follows. Topoisomerase IV is essential for chromosome segregation. It relaxes supercoiled DNA. Performs the decatenation events required during the replication of a circular DNA molecule. The polypeptide is DNA topoisomerase 4 subunit A (Staphylococcus aureus).